Consider the following 108-residue polypeptide: Transmembrane protein 141 (108 aa).

2 consecutive transmembrane segments (helical) span residues 32–52 (MKGV…QMFI) and 58–78 (YPLQ…SYGV).

The protein belongs to the TMEM141 family.

The protein localises to the membrane. This chain is Transmembrane protein 141 (TMEM141), found in Homo sapiens (Human).